We begin with the raw amino-acid sequence, 147 residues long: Large ribosomal subunit protein uL13 (147 aa).

The tract at residues 126–147 (GGPEHPHAAQNPQPYEITQIAQ) is disordered.

The protein belongs to the universal ribosomal protein uL13 family. Part of the 50S ribosomal subunit.

This protein is one of the early assembly proteins of the 50S ribosomal subunit, although it is not seen to bind rRNA by itself. It is important during the early stages of 50S assembly. In Cutibacterium acnes (strain DSM 16379 / KPA171202) (Propionibacterium acnes), this protein is Large ribosomal subunit protein uL13.